The primary structure comprises 516 residues: MYIYINNEIEELIECAKKIPILNNNENGNDHNKSISKLITIFKSKQRSRSSSFSLDTLNFNLSSSSSNSIEIDDENPYNTNNNNNSNNNNNNNNNNCNNSNNSNNNKNINSLDNIDINNNNKNNFNDCSSYSSFSSSECLSDIGNSCIDSLELFRLSDDIEEESEMIFNQVGPDRYNDLANIFSKSHKNLTILLKDINRDTLDCSECIDGSLSDNEWEKCLCCGDIHSLGDYKHVECIGKGGYGVVCKFINKKTNEIRAIKTIRKDYSALKEINTLKELGGQFTVNIFHTFLSPCKEKVLIEMEYLSGGDCAFHLNDVGVGFPEELAKQYTAETVLCLDFIHEKSIIHCDIKPNNMVIDSDGHIKLLDFGNAKKFNQKKPTSNDGILGSPRYISPEVLLFEPQSPAVDYWSLGIVMFELITGTTPFIGETPEEIFESILSRNTECIEIQKDAKDLIIKLLDPNPSTRIGSKDIKNHPYFNGINWDTIKTSQPIWKPNSSNNFITSINGCCKLINSF.

The tract at residues 69-115 (SIEIDDENPYNTNNNNNSNNNNNNNNNNCNNSNNSNNNKNINSLDNI) is disordered. The segment covering 79-115 (NTNNNNNSNNNNNNNNNNCNNSNNSNNNKNINSLDNI) has biased composition (low complexity). The region spanning 232 to 479 (YKHVECIGKG…SKDIKNHPYF (248 aa)) is the Protein kinase domain. Residues 238–246 (IGKGGYGVV) and Lys-261 contribute to the ATP site. Asp-350 (proton acceptor) is an active-site residue.

The protein belongs to the protein kinase superfamily. AGC Ser/Thr protein kinase family.

It carries out the reaction L-seryl-[protein] + ATP = O-phospho-L-seryl-[protein] + ADP + H(+). It catalyses the reaction L-threonyl-[protein] + ATP = O-phospho-L-threonyl-[protein] + ADP + H(+). The sequence is that of Probable serine/threonine-protein kinase DDB_G0293276 from Dictyostelium discoideum (Social amoeba).